The sequence spans 289 residues: ATP synthase mitochondrial F1 complex assembly factor 2 (289 aa).

The transit peptide at Met-1–Tyr-40 directs the protein to the mitochondrion. Lys-133 bears the N6-succinyllysine mark.

This sequence belongs to the ATP12 family. In terms of assembly, interacts with ATP5F1B; involved in the assembly of the F1 component of the mitochondrial ATP synthase (ATPase). Interacts with FMC1.

It localises to the mitochondrion inner membrane. Plays a role in the assembly of the F1 component of the mitochondrial ATP synthase (ATPase). The chain is ATP synthase mitochondrial F1 complex assembly factor 2 (ATPAF2) from Bos taurus (Bovine).